A 166-amino-acid polypeptide reads, in one-letter code: Small ribosomal subunit protein uS5 (166 aa).

Positions 11 to 74 (LQEKLVQVNR…DQARRNMVKV (64 aa)) constitute an S5 DRBM domain.

Belongs to the universal ribosomal protein uS5 family. As to quaternary structure, part of the 30S ribosomal subunit. Contacts proteins S4 and S8.

Functionally, with S4 and S12 plays an important role in translational accuracy. Its function is as follows. Located at the back of the 30S subunit body where it stabilizes the conformation of the head with respect to the body. This chain is Small ribosomal subunit protein uS5, found in Chromohalobacter salexigens (strain ATCC BAA-138 / DSM 3043 / CIP 106854 / NCIMB 13768 / 1H11).